The sequence spans 137 residues: MITLFLSPSCTSCRKARAWLSKHEVAFEEHNIITSPLNKEELLQILSFTENGTEDIISTRSKVFQKLAIDVDELSTSSLMELISENPSLLRRPIILDKKRMQIGFNEDEIRAFLPRDYRKQELKQATIRAEIEGKHD.

A disulfide bridge connects residues C10 and C13.

This sequence belongs to the ArsC family. Spx subfamily. As to quaternary structure, interacts with the C-terminal domain of the alpha subunit of the RNAP.

It localises to the cytoplasm. In terms of biological role, global transcriptional regulator that plays a key role in stress response and exerts either positive or negative regulation of genes. Acts by interacting with the C-terminal domain of the alpha subunit of the RNA polymerase (RNAP). This interaction can enhance binding of RNAP to the promoter region of target genes and stimulate their transcription, or block interaction of RNAP with activator. The polypeptide is Global transcriptional regulator Spx (Streptococcus agalactiae serotype III (strain NEM316)).